A 250-amino-acid chain; its full sequence is Indole-3-glycerol phosphate synthase (250 aa).

Belongs to the TrpC family.

It catalyses the reaction 1-(2-carboxyphenylamino)-1-deoxy-D-ribulose 5-phosphate + H(+) = (1S,2R)-1-C-(indol-3-yl)glycerol 3-phosphate + CO2 + H2O. The protein operates within amino-acid biosynthesis; L-tryptophan biosynthesis; L-tryptophan from chorismate: step 4/5. This Bacillus pumilus (strain SAFR-032) protein is Indole-3-glycerol phosphate synthase.